A 311-amino-acid chain; its full sequence is MKVAVLGAAGGIGQALALLLKTQLPAGSKLSLYDIAPVTPGVAVDLSHIPTAVEVKGFAGEDPTPALEGADVVLISAGVARKPGMDRSDLFNINAGIVRNLVEKCAAACPKALIGIITNPVNTTVAIAAEVLKAAGVYDKNRLFGVTTLDVIRSETFIAEAKGLNVDDVKINVIGGHSGVTILPLLSQVQGVSFSDEEVAALTTRIQNAGTEVVEAKAGGGSATLSMGQAACRFGLSLVRGLQGEENVIECAYVDGGSEHADFFAQPILLGKNGVESVLAYGEVSEFEANARDAMLDTLKADIKLGVEFVK.

Residues 7-13 (GAAGGIG) and Asp34 contribute to the NAD(+) site. Substrate is bound by residues Arg81 and Arg87. NAD(+) contacts are provided by residues Asn94 and 117–119 (ITN). Positions 119 and 153 each coordinate substrate. His177 acts as the Proton acceptor in catalysis. Met227 contributes to the NAD(+) binding site.

This sequence belongs to the LDH/MDH superfamily. MDH type 1 family. As to quaternary structure, homodimer.

The enzyme catalyses (S)-malate + NAD(+) = oxaloacetate + NADH + H(+). Its function is as follows. Catalyzes the reversible oxidation of malate to oxaloacetate. This is Malate dehydrogenase from Shewanella sediminis (strain HAW-EB3).